We begin with the raw amino-acid sequence, 483 residues long: 6-phosphogluconate dehydrogenase, decarboxylating 1 (483 aa).

NADP(+) is bound by residues 11–16 (GLAVMG), 34–36 (NRT), 78–80 (VKA), and Asn-106. Substrate is bound by residues Asn-106 and 132–134 (SGG). Catalysis depends on Lys-186, which acts as the Proton acceptor. Substrate is bound at residue 189 to 190 (HN). Glu-193 acts as the Proton donor in catalysis. Substrate is bound by residues Tyr-194, Lys-264, Arg-291, Arg-454, and His-460.

This sequence belongs to the 6-phosphogluconate dehydrogenase family. In terms of assembly, homodimer.

It localises to the cytoplasm. The enzyme catalyses 6-phospho-D-gluconate + NADP(+) = D-ribulose 5-phosphate + CO2 + NADPH. It participates in carbohydrate degradation; pentose phosphate pathway; D-ribulose 5-phosphate from D-glucose 6-phosphate (oxidative stage): step 3/3. Catalyzes the oxidative decarboxylation of 6-phosphogluconate to ribulose 5-phosphate and CO(2), with concomitant reduction of NADP to NADPH. The polypeptide is 6-phosphogluconate dehydrogenase, decarboxylating 1 (pgdC) (Spinacia oleracea (Spinach)).